The primary structure comprises 525 residues: Cytochrome P450 CYP72A613 (525 aa).

The chain crosses the membrane as a helical span at residues 2 to 22; sequence VFLFPTGTIIIWVLTILLAVI. Position 473 (C473) interacts with heme.

The protein belongs to the cytochrome P450 family. Mainly expressed in leaves and seed pods and, to a lower extent, in flowers and stems.

Its subcellular location is the membrane. It functions in the pathway steroid metabolism; cholesterol metabolism. In terms of biological role, involved in the biosynthesis of spiroketal steroid and saponin natural products from cholesterol such as diosgenin and analogs (e.g. furostanol and spirostanol), plant defense compounds used as main precursors for the industrial production of steroid hormones. During the 5,6-spiroketalization of cholesterol, may catalyze the 27-monohydroxylation of furostanol-type steroid to an intermediate product that undergoes a stereospecific formation of the terminal heterocycle to yield diosgenin. The sequence is that of Cytochrome P450 CYP72A613 from Trigonella foenum-graecum (Fenugreek).